Reading from the N-terminus, the 104-residue chain is Replication restart protein PriB (104 aa).

In terms of domain architecture, SSB spans 1–101 (MTNRLVLSGT…LHAEQIDLID (101 aa)).

Belongs to the PriB family. As to quaternary structure, homodimer. Interacts with PriA and DnaT. Component of the replication restart primosome. Primosome assembly occurs via a 'hand-off' mechanism. PriA binds to replication forks, subsequently PriB then DnaT bind; DnaT then displaces ssDNA to generate the helicase loading substrate.

Involved in the restart of stalled replication forks, which reloads the replicative helicase on sites other than the origin of replication; the PriA-PriB pathway is the major replication restart pathway. During primosome assembly it facilitates complex formation between PriA and DnaT on DNA; stabilizes PriA on DNA. Stimulates the DNA unwinding activity of PriA helicase. The polypeptide is Replication restart protein PriB (Enterobacter sp. (strain 638)).